Consider the following 55-residue polypeptide: Large ribosomal subunit protein bL33 (55 aa).

It belongs to the bacterial ribosomal protein bL33 family.

This Acidiphilium cryptum (strain JF-5) protein is Large ribosomal subunit protein bL33.